The sequence spans 470 residues: Regulator of microtubule dynamics protein 3 (470 aa).

Topologically, residues 1–12 (MSRLGALGGSRA) are mitochondrial intermembrane. A helical transmembrane segment spans residues 13-35 (GLGLLLGTAAGLGFLCVLYSQRW). The Cytoplasmic portion of the chain corresponds to 36-470 (KRTQRHGRSH…DLEELEVILG (435 aa)). Ser44, Ser46, Ser50, and Ser57 each carry phosphoserine. Residues 91 to 125 (LDRLDFVLTSLMALRREVEELQRSLQGLAGEIVGE) adopt a coiled-coil conformation. The FFAT signature appears at 157–163 (VYFTASS). Thr160 carries the post-translational modification Phosphothreonine. Residues 168–205 (TDAESEGGYTTANAESDYERDSDKESGDAEDEVSCETV) form a disordered region. Phosphoserine is present on residues Ser183, Ser193, Ser212, and Ser233. Residues 184 to 194 (DYERDSDKESG) show a composition bias toward basic and acidic residues.

Belongs to the RMDN family. As to quaternary structure, interacts with PTPN2. Interacts with microtubules. Interacts with VAPB. Interacts (via FFAT motif) with MOSPD2 (via MSP domain). Interacts (via phosphorylated FFAT motif) with MOSPD2, VAPA and VAPB. Phosphorylation at Thr-160 of the FFAT motif activates interaction with MOSPD2, VAPA and VAPB.

It localises to the mitochondrion outer membrane. The protein resides in the cytoplasm. Its subcellular location is the nucleus. The protein localises to the cytoskeleton. It is found in the spindle. It localises to the spindle pole. Involved in cellular calcium homeostasis regulation. May participate in differentiation and apoptosis of keratinocytes. Overexpression induces apoptosis. In Mus musculus (Mouse), this protein is Regulator of microtubule dynamics protein 3.